A 214-amino-acid polypeptide reads, in one-letter code: Probable GTP-binding protein EngB (214 aa).

Positions 25 to 203 (EGAEVAFAGR…EQVITGWLNL (179 aa)) constitute an EngB-type G domain. GTP-binding positions include 33–40 (GRSNAGKS), 60–64 (GRTQL), 80–83 (DLPG), 147–150 (TKSD), and 182–184 (FSS). Ser40 and Thr62 together coordinate Mg(2+).

Belongs to the TRAFAC class TrmE-Era-EngA-EngB-Septin-like GTPase superfamily. EngB GTPase family. Mg(2+) is required as a cofactor.

Functionally, necessary for normal cell division and for the maintenance of normal septation. The chain is Probable GTP-binding protein EngB from Teredinibacter turnerae (strain ATCC 39867 / T7901).